We begin with the raw amino-acid sequence, 305 residues long: 4-diphosphocytidyl-2-C-methyl-D-erythritol kinase (305 aa).

Residue lysine 17 is part of the active site. 111–121 (PVASGIGGGSA) provides a ligand contact to ATP. Aspartate 154 is an active-site residue.

This sequence belongs to the GHMP kinase family. IspE subfamily.

It catalyses the reaction 4-CDP-2-C-methyl-D-erythritol + ATP = 4-CDP-2-C-methyl-D-erythritol 2-phosphate + ADP + H(+). The protein operates within isoprenoid biosynthesis; isopentenyl diphosphate biosynthesis via DXP pathway; isopentenyl diphosphate from 1-deoxy-D-xylulose 5-phosphate: step 3/6. Catalyzes the phosphorylation of the position 2 hydroxy group of 4-diphosphocytidyl-2C-methyl-D-erythritol. This is 4-diphosphocytidyl-2-C-methyl-D-erythritol kinase from Gluconacetobacter diazotrophicus (strain ATCC 49037 / DSM 5601 / CCUG 37298 / CIP 103539 / LMG 7603 / PAl5).